The chain runs to 962 residues: Nonsense-mediated mRNA decay factor SMG8 (962 aa).

Positions 634 to 661 are disordered; sequence RSPEISSQIASSGLSSRSNSTSSGTSSA. Residues 639–661 are compositionally biased toward low complexity; the sequence is SSQIASSGLSSRSNSTSSGTSSA.

Belongs to the SMG8 family.

Involved in nonsense-mediated decay (NMD) of mRNAs containing premature stop codons. Probable component of kinase complex containing nonC and recruited to stalled ribosomes. This chain is Nonsense-mediated mRNA decay factor SMG8, found in Drosophila virilis (Fruit fly).